We begin with the raw amino-acid sequence, 270 residues long: Cbp/p300-interacting transactivator 2 (270 aa).

Residues 138 to 201 are disordered; it reads LHPAAGHQMN…SGGGSGSGNM (64 aa). Over residues 165–198 the composition is skewed to gly residues; the sequence is STPGGSGGSSTPGGSGSSSGGGAGSSNSGGGSGS.

Belongs to the CITED family. In terms of assembly, interacts (via C-terminus) with SMAD2. Interacts (via C-terminus) with SMAD3 (via MH2 domain). Interacts with LHX2 (via LIM domains). Interacts with WT1. Interacts (via C-terminus) with EP300 (via CH1 domain); the interaction is stimulated in response to hypoxia. Interacts with PPARA. Interacts (via C-terminus) with TFAP2A, TFAP2B and TFAP2C.

The protein localises to the nucleus. Its function is as follows. Transcriptional coactivator of the p300/CBP-mediated transcription complex. Acts as a bridge, linking TFAP2 transcription factors and the p300/CBP transcriptional coactivator complex in order to stimulate TFAP2-mediated transcriptional activation. Positively regulates TGF-beta signaling through its association with the SMAD/p300/CBP-mediated transcriptional coactivator complex. Stimulates the peroxisome proliferator-activated receptors PPARA transcriptional activity. Enhances estrogen-dependent transactivation mediated by estrogen receptors. Also acts as a transcriptional corepressor; interferes with the binding of the transcription factors HIF1A or STAT2 and the p300/CBP transcriptional coactivator complex. Participates in sex determination and early gonad development by stimulating transcription activation of SRY. Plays a role in controlling left-right patterning during embryogenesis; potentiates transcriptional activation of NODAL-mediated gene transcription in the left lateral plate mesoderm (LPM). Plays an essential role in differentiation of the adrenal cortex from the adrenogonadal primordium (AGP); stimulates WT1-mediated transcription activation thereby up-regulating the nuclear hormone receptor NR5A1 promoter activity. Associates with chromatin to the PITX2 P1 promoter region. In Homo sapiens (Human), this protein is Cbp/p300-interacting transactivator 2 (CITED2).